The primary structure comprises 136 residues: Classical arabinogalactan protein 26 (136 aa).

Residues 1–21 form the signal peptide; sequence MSVSLFTAFTVLSLCLHTSTS. A disordered region spans residues 38 to 95; it reads APSSFSASTPAMSPDTSPLFPTPGSSEMSPSPSESSIMPTIPSSLSPPNPDAVTPDPL. Positions 40 to 53 are enriched in polar residues; sequence SSFSASTPAMSPDT. Low complexity predominate over residues 59–81; sequence TPGSSEMSPSPSESSIMPTIPSS. Serine 108 is lipidated: GPI-anchor amidated serine. A propeptide spans 109–136 (removed in mature form); sequence SSVCLVSSQLSSLLLVLLMLLLAFCSFF.

The protein belongs to the classical AGP family. In terms of processing, O-glycosylated on the hydroxyproline residues.

Its subcellular location is the cell membrane. Its function is as follows. Proteoglycan that seems to be implicated in diverse developmental roles such as differentiation, cell-cell recognition, embryogenesis and programmed cell death. This Arabidopsis thaliana (Mouse-ear cress) protein is Classical arabinogalactan protein 26 (AGP26).